The chain runs to 293 residues: Plant cysteine oxidase 1 (293 aa).

Positions 148, 150, and 211 each coordinate Fe cation. The disordered stretch occupies residues 250-293 (SEDDDVLSSEEEKEGYAWLQERDDNPEDHTNVVGALYRGPKVED). Over residues 251–262 (EDDDVLSSEEEK) the composition is skewed to acidic residues. The segment covering 269–279 (QERDDNPEDHT) has biased composition (basic and acidic residues).

Belongs to the cysteine dioxygenase family. The cofactor is Fe(2+).

It is found in the nucleus. It localises to the cytoplasm. The catalysed reaction is L-cysteine + O2 = 3-sulfino-L-alanine + H(+). In terms of biological role, catalyzes the oxidation of N-terminal cysteine residues (N-Cys), thus preparing the protein for N-end rule pathway-mediated proteasomal degradation, upstream of the N-end rule enzymes ATE1, ATE2 and PRT6. Controls the preparation of the group VII ethylene response factor (ERF-VII) proteins for degradation via the 26S proteasome N-end rule pathway. Acts as an oxygen sensor that controls the stability of ERF-VII proteins, which are stabilized in flooding-induced hypoxia, and regulate transcriptional adaptation to these adverse conditions. Not active on Cys located inside or at the C-terminus of a peptide. Acts redundantly with PCO2 to repress the anaerobic response. The protein is Plant cysteine oxidase 1 of Arabidopsis thaliana (Mouse-ear cress).